A 615-amino-acid polypeptide reads, in one-letter code: DNA mismatch repair protein MutL (615 aa).

A disordered region spans residues 362-397; the sequence is HFAEPAVREPVAPRYSPAPASGSRPAAPWPNAQPGY. Residues 373–387 show a composition bias toward low complexity; sequence APRYSPAPASGSRPA.

It belongs to the DNA mismatch repair MutL/HexB family.

Functionally, this protein is involved in the repair of mismatches in DNA. It is required for dam-dependent methyl-directed DNA mismatch repair. May act as a 'molecular matchmaker', a protein that promotes the formation of a stable complex between two or more DNA-binding proteins in an ATP-dependent manner without itself being part of a final effector complex. This Escherichia coli O81 (strain ED1a) protein is DNA mismatch repair protein MutL.